Here is a 217-residue protein sequence, read N- to C-terminus: Probable transaldolase (217 aa).

The Schiff-base intermediate with substrate role is filled by Lys83.

Belongs to the transaldolase family. Type 3B subfamily.

It localises to the cytoplasm. It carries out the reaction D-sedoheptulose 7-phosphate + D-glyceraldehyde 3-phosphate = D-erythrose 4-phosphate + beta-D-fructose 6-phosphate. It participates in carbohydrate degradation; pentose phosphate pathway; D-glyceraldehyde 3-phosphate and beta-D-fructose 6-phosphate from D-ribose 5-phosphate and D-xylulose 5-phosphate (non-oxidative stage): step 2/3. In terms of biological role, transaldolase is important for the balance of metabolites in the pentose-phosphate pathway. This Clostridium botulinum (strain Hall / ATCC 3502 / NCTC 13319 / Type A) protein is Probable transaldolase.